The chain runs to 150 residues: Large ribosomal subunit protein bL9 (150 aa).

This sequence belongs to the bacterial ribosomal protein bL9 family.

Its function is as follows. Binds to the 23S rRNA. The protein is Large ribosomal subunit protein bL9 of Ralstonia pickettii (strain 12J).